A 1479-amino-acid chain; its full sequence is Putative receptor-type tyrosine-protein phosphatase mosPTP-1 (1479 aa).

An N-terminal signal peptide occupies residues 1-28 (MKPRLLTTVTTWLALVLPVVYLSRPCQA). Residues 29 to 365 (LPTVNFTANY…RQSYNDYNLA (337 aa)) are Extracellular-facing. Asn-33, Asn-40, Asn-146, Asn-182, Asn-248, Asn-294, and Asn-306 each carry an N-linked (GlcNAc...) asparagine glycan. 2 consecutive Fibronectin type-III domains span residues 143-242 (KPLN…AGPS) and 243-346 (APKV…VQLN). The helical transmembrane segment at 366-386 (VMIGILICCFGLLFIVLTILL) threads the bilayer. Residues 387 to 1479 (WKKCFHAAYY…AKLRAVVRVE (1093 aa)) lie on the Cytoplasmic side of the membrane. Tyrosine-protein phosphatase domains lie at 452–717 (FSKE…LVEA) and 740–992 (IDSQ…LSYM). Cys-658 functions as the Phosphocysteine intermediate in the catalytic mechanism.

This sequence belongs to the protein-tyrosine phosphatase family. Receptor class subfamily. Interacts with C-type lectin mosGCTL-1. Interacts with C-type lectin mosGCTL-7.

The protein localises to the cell membrane. The catalysed reaction is O-phospho-L-tyrosyl-[protein] + H2O = L-tyrosyl-[protein] + phosphate. Its function is as follows. Putative protein tyrosine-protein phosphatase. (Microbial infection) Facilitates West Nile virus infection in mosquitoes. The protein is Putative receptor-type tyrosine-protein phosphatase mosPTP-1 of Culex quinquefasciatus (Southern house mosquito).